The following is a 682-amino-acid chain: Nephrocystin-1-like protein (682 aa).

The stretch at 10-100 (LQDAINRFPQ…ALSPEKEQLS (91 aa)) forms a coiled coil. The interval 96-188 (KEQLSFSVSV…PLESKTLNER (93 aa)) is disordered. The segment covering 128–148 (NDDESEDSDNDSEIIETDVQL) has biased composition (acidic residues). Residues 215-275 (VRGNVFVAID…PKTYLQHVKE (61 aa)) form the SH3 domain.

Belongs to the nephrocystin-1 family. Expressed in ciliated sensory neurons of the head (amphid neurons) and the tail in hermaphrodites (phasmid neurons) and males (sensory ray neurons).

Its function is as follows. Plays a role in the extension of dendrites from phasmid ciliated sensory neurons. May be necessary for initial assembly of the cilium. This is Nephrocystin-1-like protein from Caenorhabditis elegans.